We begin with the raw amino-acid sequence, 129 residues long: Small ribosomal subunit protein uS11 (129 aa).

The protein belongs to the universal ribosomal protein uS11 family. Part of the 30S ribosomal subunit. Interacts with proteins S7 and S18. Binds to IF-3.

In terms of biological role, located on the platform of the 30S subunit, it bridges several disparate RNA helices of the 16S rRNA. Forms part of the Shine-Dalgarno cleft in the 70S ribosome. The polypeptide is Small ribosomal subunit protein uS11 (Geobacillus sp. (strain WCH70)).